The chain runs to 152 residues: Transcriptional regulator MraZ (152 aa).

2 SpoVT-AbrB domains span residues 5–52 (ASAI…PLQE) and 81–124 (AHEC…DEAA).

Belongs to the MraZ family. As to quaternary structure, forms oligomers.

It localises to the cytoplasm. Its subcellular location is the nucleoid. The chain is Transcriptional regulator MraZ from Shewanella denitrificans (strain OS217 / ATCC BAA-1090 / DSM 15013).